Consider the following 465-residue polypeptide: Interferon-inducible GTPase 5 (465 aa).

The IRG-type G domain occupies 53–235 (TRLEVGVTGE…PLLMSTWERD (183 aa)). GTP contacts are provided by residues 62–69 (ESGAGKSS), 87–91 (TGVVE), 169–171 (KVD), and 216–218 (SNL). S247 and S304 each carry phosphoserine. The disordered stretch occupies residues 405–438 (EEEEDTQPDVSLEAAGDNGVEKRGSGEGSMEEAP).

Belongs to the TRAFAC class dynamin-like GTPase superfamily. IRG family.

Its subcellular location is the cell projection. The protein localises to the cilium. It localises to the flagellum. It is found in the lipid droplet. It catalyses the reaction GTP + H2O = GDP + phosphate + H(+). Its function is as follows. Required for sperm motility and therefore male fertility, via positive regulation of spermatozoa fibrous sheath formation. The chain is Interferon-inducible GTPase 5 (IRGC) from Bos taurus (Bovine).